We begin with the raw amino-acid sequence, 95 residues long: Synaptobrevin-A (95 aa).

At 1–70 (MSEPVNKVKQ…KRLMWCRNIK (70 aa)) the chain is on the cytoplasmic side. One can recognise a v-SNARE coiled-coil homology domain in the interval 7–67 (KVKQTQQQVD…NEIKRLMWCR (61 aa)). Residues 71–91 (LTLIIIAVVVLLLVVIIVPIV) form a helical; Anchor for type IV membrane protein membrane-spanning segment. Over 92-95 (LKFT) the chain is Vesicular.

The protein belongs to the synaptobrevin family.

The protein resides in the cytoplasmic vesicle. It localises to the secretory vesicle membrane. In terms of biological role, involved in the targeting and/or fusion of transport vesicles to their target membrane. The polypeptide is Synaptobrevin-A (sybA) (Dictyostelium discoideum (Social amoeba)).